A 55-amino-acid polypeptide reads, in one-letter code: Trypsin inhibitor (55 aa).

Positions 4 to 54 (CLLPIKTGPCKGSFPRYAYDSSEDKCVEFIYGGCQANANNFETIEECEAAC) constitute a BPTI/Kunitz inhibitor domain. Disulfide bonds link Cys-4–Cys-54, Cys-13–Cys-37, and Cys-29–Cys-50.

As to quaternary structure, monomer. Expressed exclusively in the middle silk gland.

This cocoon shell-associated protein inhibits trypsin Activity by forming a low-dissociation complex with trypsin. May play an important part in regulating proteolytic activity in the silk gland or protecting silk proteins from degradation during histolysis. This chain is Trypsin inhibitor, found in Bombyx mori (Silk moth).